An 88-amino-acid chain; its full sequence is Small ribosomal subunit protein uS15 (88 aa).

The protein belongs to the universal ribosomal protein uS15 family. In terms of assembly, part of the 30S ribosomal subunit. Forms a bridge to the 50S subunit in the 70S ribosome, contacting the 23S rRNA.

In terms of biological role, one of the primary rRNA binding proteins, it binds directly to 16S rRNA where it helps nucleate assembly of the platform of the 30S subunit by binding and bridging several RNA helices of the 16S rRNA. Forms an intersubunit bridge (bridge B4) with the 23S rRNA of the 50S subunit in the ribosome. This Leptospira borgpetersenii serovar Hardjo-bovis (strain JB197) protein is Small ribosomal subunit protein uS15.